The following is a 1209-amino-acid chain: MATTSNMFLYSLTIQPPTAVTQALLGQFSGTKEQQILTASGSRLTLLQPDPRQGKVNTLLSHDIFGIVRAIASFRLAGSHKDYIILATDSGRITIIEYLPKTNKFQRIHLETFGKSGVRRVIPGQYLAADPKGRACLISALEKNKLVYVLNRNSQAELTISSPLEAHKPGVLVLSLVALDVGYANPVFAALELDYTDADQDPTGQAREEVETQLVYYELDLGLNHVVRKWSDTVDRTSSLLFQVPGGNDGPSGVLVCGEENVTYRHSNQEAFRVPIPRRSGATEDPQRKRVIVSGVMHKLKGSAGAFFFLLQTDDGDLFKVTIDMIEDSDGNPTGEVKRLKIKYFDTIPVATSLCILKSGFLFAASEFGNHHFYQFEKLGDDDEELEFSSDDFPTDPTASYNPVYFHPRPLENLVLVESIDSMNPQVDCKVANLTGEDAPQIYSVCGNGARSTFRMLKHGLEVSEIVASELPGTPSAVWTTKLTKYDQYDAYIVLSFTNGTLVLSIGETVEEVSDSGFLTTAPTLAVQQMGEDGLIQVHPKGIRHIVQGRVNEWPAPQHRSIVAATANENQVVIALSSGEIVYFEMDSDGSLAEYDEKKEMSGTVTSLSVGQVPEGLKRSSFLAVGCDDCTVRILSLDPDSTLEMKSIQALTAAPSALSIMSMEDSFGGSTLYLHIGLHSGVYLRTVLDEVTGELTDTRQKFLGPKPTRLFQVSVQDQPCVLALSSRPWLGYTDPLTKGFMMTPLSYTELEYGWNFSSEQCLEGMVGIHANYLRIFSIEKLGDNMIQKSIPLTYTPKHLVKHPEQPYFYTIESDNNTLPPELRAKLLEQQSNGDATVLPPEDFGYPRAKGRWASCISIIDPISEEPRVLQRIDLDNNEAAVSAAIVPFASQEGESFLVVGTGKDMVLDPRQFTEGYIHVYRFHEDGRDLEFIHKTRVEEPPLALIPFQGRLLAGVGKTLRIYDLGLKQLLRKAQADVTPTLIVSLQSQGNRIIVGDLQQGITYVVYKAEGNRLIPFADDTLNRWTTCTTMVDYESVAGGDKFGNIYIVRCPERVSQETDEPGSEIHLMHARNYLHGTPNRLSLQVHFYTQDLPTSICKTSLVVGGQDVLLWSGLQGTVGVFIPFVSREDVDFFQNLENHMRAEDPPLAGRDHLIYRGYYTPVKGVIDGDLCERFSLLPNDKKQMIAGELDRSVREIERKISDIRTRSAF.

This sequence belongs to the RSE1 family. As to quaternary structure, associated with the spliceosome.

It localises to the nucleus. Functionally, involved in pre-mRNA splicing and cell cycle control. This Neurospora crassa (strain ATCC 24698 / 74-OR23-1A / CBS 708.71 / DSM 1257 / FGSC 987) protein is Pre-mRNA-splicing factor rse1 (msp-5).